We begin with the raw amino-acid sequence, 348 residues long: Fructose-1,6-bisphosphatase class 1 2 (348 aa).

Mg(2+) contacts are provided by Glu-93, Asp-117, Leu-119, and Asp-120. Substrate contacts are provided by residues 120–123 (DGSS), Asn-213, Tyr-244, and Lys-274. Glu-280 contributes to the Mg(2+) binding site.

Belongs to the FBPase class 1 family. Homotetramer. The cofactor is Mg(2+).

The protein localises to the cytoplasm. It catalyses the reaction beta-D-fructose 1,6-bisphosphate + H2O = beta-D-fructose 6-phosphate + phosphate. It functions in the pathway carbohydrate biosynthesis; gluconeogenesis. The sequence is that of Fructose-1,6-bisphosphatase class 1 2 from Christiangramia forsetii (strain DSM 17595 / CGMCC 1.15422 / KT0803) (Gramella forsetii).